A 284-amino-acid polypeptide reads, in one-letter code: Deoxyribonuclease-1 (284 aa).

The signal sequence occupies residues 1 to 22 (MRAARLMGALLALAGLLQLALS). Asparagine 40 carries an N-linked (GlcNAc...) asparagine glycan. The active site involves glutamate 100. Cysteines 123 and 126 form a disulfide. Asparagine 128 carries N-linked (GlcNAc...) asparagine glycosylation. Histidine 156 is a catalytic residue. An intrachain disulfide couples cysteine 195 to cysteine 231.

It belongs to the DNase I family. Requires Ca(2+) as cofactor. Mg(2+) is required as a cofactor.

It localises to the secreted. The protein resides in the zymogen granule. It is found in the nucleus envelope. The enzyme catalyses Endonucleolytic cleavage to 5'-phosphodinucleotide and 5'-phosphooligonucleotide end-products.. Its function is as follows. Serum endocuclease secreted into body fluids by a wide variety of exocrine and endocrine organs. Expressed by non-hematopoietic tissues and preferentially cleaves protein-free DNA. Among other functions, seems to be involved in cell death by apoptosis. Binds specifically to G-actin and blocks actin polymerization. Together with DNASE1L3, plays a key role in degrading neutrophil extracellular traps (NETs). NETs are mainly composed of DNA fibers and are released by neutrophils to bind pathogens during inflammation. Degradation of intravascular NETs by DNASE1 and DNASE1L3 is required to prevent formation of clots that obstruct blood vessels and cause organ damage following inflammation. This Sus scrofa (Pig) protein is Deoxyribonuclease-1 (DNASE1).